Consider the following 211-residue polypeptide: Large ribosomal subunit protein eL13 (211 aa).

N6-acetyllysine is present on Lys16. Ser52, Ser77, and Ser106 each carry phosphoserine. Glycyl lysine isopeptide (Lys-Gly) (interchain with G-Cter in SUMO2) cross-links involve residues Lys123 and Lys145. Residue Lys174 forms a Glycyl lysine isopeptide (Lys-Gly) (interchain with G-Cter in SUMO1); alternate linkage. Glycyl lysine isopeptide (Lys-Gly) (interchain with G-Cter in SUMO2); alternate cross-links involve residues Lys174 and Lys177. An N6-acetyllysine; alternate modification is found at Lys177.

Belongs to the eukaryotic ribosomal protein eL13 family. As to quaternary structure, component of the 60S large ribosomal subunit (LSU).

The protein localises to the cytoplasm. Its function is as follows. Component of the ribosome, a large ribonucleoprotein complex responsible for the synthesis of proteins in the cell. The small ribosomal subunit (SSU) binds messenger RNAs (mRNAs) and translates the encoded message by selecting cognate aminoacyl-transfer RNA (tRNA) molecules. The large subunit (LSU) contains the ribosomal catalytic site termed the peptidyl transferase center (PTC), which catalyzes the formation of peptide bonds, thereby polymerizing the amino acids delivered by tRNAs into a polypeptide chain. The nascent polypeptides leave the ribosome through a tunnel in the LSU and interact with protein factors that function in enzymatic processing, targeting, and the membrane insertion of nascent chains at the exit of the ribosomal tunnel. As part of the LSU, it is probably required for its formation and the maturation of rRNAs. Plays a role in bone development. This is Large ribosomal subunit protein eL13 (Rpl13) from Rattus norvegicus (Rat).